A 341-amino-acid polypeptide reads, in one-letter code: Tubulin beta chain (341 aa).

Positions 64, 68, 69, 70, 130, and 152 each coordinate GTP.

Belongs to the tubulin family. In terms of assembly, dimer of alpha and beta chains. A typical microtubule is a hollow water-filled tube with an outer diameter of 25 nm and an inner diameter of 15 nM. Alpha-beta heterodimers associate head-to-tail to form protofilaments running lengthwise along the microtubule wall with the beta-tubulin subunit facing the microtubule plus end conferring a structural polarity. Microtubules usually have 13 protofilaments but different protofilament numbers can be found in some organisms and specialized cells. Mg(2+) is required as a cofactor.

It is found in the cytoplasm. The protein localises to the cytoskeleton. Its function is as follows. Tubulin is the major constituent of microtubules, a cylinder consisting of laterally associated linear protofilaments composed of alpha- and beta-tubulin heterodimers. Microtubules grow by the addition of GTP-tubulin dimers to the microtubule end, where a stabilizing cap forms. Below the cap, tubulin dimers are in GDP-bound state, owing to GTPase activity of alpha-tubulin. This chain is Tubulin beta chain, found in Haliotis discus (Abalone).